The following is a 274-amino-acid chain: NAD(P)H dehydrogenase [quinone] 1 (274 aa).

FAD is bound by residues H12, 18–19, and Q67; that span reads FN. Phosphoserine is present on S82. Residue 104–107 participates in FAD binding; the sequence is LQWF. Residue 126–128 coordinates substrate; the sequence is AYT. Residues 148–151, Y156, and R201 contribute to the FAD site; that span reads TTGG. Positions 225–274 are important for apoenzyme conformational stability; sequence PSSLFDLNFQAGFLMKKEVQDEEKNKKFGLSVGHHLGKSIPTDNQIKARK. Residues K250 and K251 each participate in a glycyl lysine isopeptide (Lys-Gly) (interchain with G-Cter in SUMO2) cross-link.

This sequence belongs to the NAD(P)H dehydrogenase (quinone) family. In terms of assembly, homodimer. Interacts with PDLIM4 isoform 2; this interaction stabilizes PDLIM4 isoform 2 in response to oxidative stress and protects it from ubiquitin-independent degradation by the core 20S proteasome. Interacts with TP73 (via SAM domain); this interaction is NADH-dependent, stabilizes TP73 in response to oxidative stress and protects it from ubiquitin-independent degradation by the 20S proteasome. Interacts with TP53; this interaction is NADH-dependent, stabilizes TP53 in response to oxidative stress and protects it from ubiquitin-independent degradation by the 20S proteasome. Requires FAD as cofactor.

It localises to the cytoplasm. The protein resides in the cytosol. The catalysed reaction is a quinone + NADH + H(+) = a quinol + NAD(+). It catalyses the reaction a quinone + NADPH + H(+) = a quinol + NADP(+). The enzyme catalyses ubiquinone-10 + NADH + H(+) = ubiquinol-10 + NAD(+). It carries out the reaction menadione + NADH + H(+) = menadiol + NAD(+). Its function is as follows. Flavin-containing quinone reductase that catalyzes two-electron reduction of quinones to hydroquinones using either NADH or NADPH as electron donors. In a ping-pong kinetic mechanism, the electrons are sequentially transferred from NAD(P)H to flavin cofactor and then from reduced flavin to the quinone, bypassing the formation of semiquinone and reactive oxygen species. Regulates cellular redox state primarily through quinone detoxification. Reduces components of plasma membrane redox system such as coenzyme Q and vitamin quinones, producing antioxidant hydroquinone forms. In the process may function as superoxide scavenger to prevent hydroquinone oxidation and facilitate excretion. Alternatively, can activate quinones and their derivatives by generating redox reactive hydroquinones with DNA cross-linking antitumor potential. Acts as a gatekeeper of the core 20S proteasome known to degrade proteins with unstructured regions. Upon oxidative stress, interacts with tumor suppressors TP53 and TP73 in a NADH-dependent way and inhibits their ubiquitin-independent degradation by the 20S proteasome. The polypeptide is NAD(P)H dehydrogenase [quinone] 1 (NQO1) (Pongo abelii (Sumatran orangutan)).